Here is a 589-residue protein sequence, read N- to C-terminus: V-type ATP synthase alpha chain (589 aa).

Position 232 to 239 (232 to 239) interacts with ATP; the sequence is GPFGSGKT.

It belongs to the ATPase alpha/beta chains family.

It catalyses the reaction ATP + H2O + 4 H(+)(in) = ADP + phosphate + 5 H(+)(out). In terms of biological role, produces ATP from ADP in the presence of a proton gradient across the membrane. The V-type alpha chain is a catalytic subunit. The sequence is that of V-type ATP synthase alpha chain from Acetivibrio thermocellus (strain ATCC 27405 / DSM 1237 / JCM 9322 / NBRC 103400 / NCIMB 10682 / NRRL B-4536 / VPI 7372) (Clostridium thermocellum).